A 330-amino-acid chain; its full sequence is 3',5'-cyclic-nucleotide phosphodiesterase (330 aa).

Residues 1–22 form the signal peptide; sequence MFKNKLAVLFTCLSVFSFSAQS.

This sequence belongs to the cyclic nucleotide phosphodiesterase class-II family.

It is found in the periplasm. It carries out the reaction a nucleoside 3',5'-cyclic phosphate + H2O = a nucleoside 5'-phosphate + H(+). Functionally, seems to allow the organism to grow on cAMP. The protein is 3',5'-cyclic-nucleotide phosphodiesterase (cpdP) of Aliivibrio fischeri (Vibrio fischeri).